A 652-amino-acid chain; its full sequence is Acetyl-coenzyme A synthetase (652 aa).

Residues 191–194 (RAGR), Thr311, and Asn335 contribute to the CoA site. ATP contacts are provided by residues 387–389 (GEP), 411–416 (DTWWQT), Asp500, and Arg515. Residue Ser523 coordinates CoA. Arg526 serves as a coordination point for ATP. 3 residues coordinate Mg(2+): Val537, His539, and Ile542. Arg584 provides a ligand contact to CoA. Position 609 is an N6-acetyllysine (Lys609).

Belongs to the ATP-dependent AMP-binding enzyme family. The cofactor is Mg(2+). Acetylated. Deacetylation by the SIR2-homolog deacetylase activates the enzyme.

The catalysed reaction is acetate + ATP + CoA = acetyl-CoA + AMP + diphosphate. Functionally, catalyzes the conversion of acetate into acetyl-CoA (AcCoA), an essential intermediate at the junction of anabolic and catabolic pathways. Acs undergoes a two-step reaction. In the first half reaction, Acs combines acetate with ATP to form acetyl-adenylate (AcAMP) intermediate. In the second half reaction, it can then transfer the acetyl group from AcAMP to the sulfhydryl group of CoA, forming the product AcCoA. Enables the cell to use acetate during aerobic growth to generate energy via the TCA cycle, and biosynthetic compounds via the glyoxylate shunt. Acetylates CheY, the response regulator involved in flagellar movement and chemotaxis. This Yersinia pseudotuberculosis serotype I (strain IP32953) protein is Acetyl-coenzyme A synthetase.